A 438-amino-acid polypeptide reads, in one-letter code: UDP-N-acetylmuramate--L-alanine ligase (438 aa).

108 to 114 (GAHGKTS) contacts ATP.

This sequence belongs to the MurCDEF family.

It is found in the cytoplasm. The catalysed reaction is UDP-N-acetyl-alpha-D-muramate + L-alanine + ATP = UDP-N-acetyl-alpha-D-muramoyl-L-alanine + ADP + phosphate + H(+). Its pathway is cell wall biogenesis; peptidoglycan biosynthesis. Functionally, cell wall formation. In Oceanobacillus iheyensis (strain DSM 14371 / CIP 107618 / JCM 11309 / KCTC 3954 / HTE831), this protein is UDP-N-acetylmuramate--L-alanine ligase.